We begin with the raw amino-acid sequence, 150 residues long: Leukotriene C4 synthase (150 aa).

The Cytoplasmic portion of the chain corresponds to 1–6 (MKDEVA). Residues 7–27 (LLATVTLVGVLLQAYFSLQVI) form a helical membrane-spanning segment. Over 28–48 (SARRAFHVSPPLTSGPPEFER) the chain is Lumenal. Residue Arg30 coordinates glutathione. Arg31 serves as the catalytic Proton donor. The residue at position 36 (Ser36) is a Phosphoserine. A helical transmembrane segment spans residues 49 to 69 (VFRAQVNCSEYFPLFLATLWV). Glutathione contacts are provided by residues 51-55 (RAQVN), Gln53, and 58-59 (EY). Over 70–73 (AGIF) the chain is Cytoplasmic. A helical transmembrane segment spans residues 74-94 (FHEGAAALCGLFYLFARLRYF). 93–97 (YFQGY) is a glutathione binding site. Residues 95–104 (QGYARSAQLR) are Lumenal-facing. Arg104 (proton acceptor) is an active-site residue. Residues 105 to 124 (LTPLYASARALWLLVAMAAL) form a helical membrane-spanning segment. The Cytoplasmic segment spans residues 125–150 (GLLVHFLPGTLRTALFRWLQMLLPMA).

Belongs to the MAPEG family. Homotrimer. Interacts with ALOX5AP and ALOX5. In terms of processing, phosphorylation at Ser-36 by RPS6KB1 inhibits the leukotriene-C4 synthase activity. In terms of tissue distribution, widely expressed.

It localises to the nucleus outer membrane. Its subcellular location is the endoplasmic reticulum membrane. The protein localises to the nucleus membrane. It catalyses the reaction leukotriene C4 = leukotriene A4 + glutathione. The catalysed reaction is (13S,14S)-epoxy-(4Z,7Z,9E,11E,16Z,19Z)-docosahexaenoate + glutathione = (13R)-S-glutathionyl-(14S)-hydroxy-(4Z,7Z,9E,11E,16Z,19Z)-docosahexaenoate. Its pathway is lipid metabolism; leukotriene C4 biosynthesis. With respect to regulation, inhibited by MK886. Its function is as follows. Catalyzes the conjugation of leukotriene A4 with reduced glutathione (GSH) to form leukotriene C4 with high specificity. Can also catalyze the transfer of a glutathionyl group from glutathione (GSH) to 13(S),14(S)-epoxy-docosahexaenoic acid to form maresin conjugate in tissue regeneration 1 (MCTR1), a bioactive lipid mediator that possess potent anti-inflammatory and proresolving actions. This chain is Leukotriene C4 synthase (Ltc4s), found in Mus musculus (Mouse).